The primary structure comprises 330 residues: Aspartate--ammonia ligase (330 aa).

Belongs to the class-II aminoacyl-tRNA synthetase family. AsnA subfamily.

Its subcellular location is the cytoplasm. It carries out the reaction L-aspartate + NH4(+) + ATP = L-asparagine + AMP + diphosphate + H(+). It functions in the pathway amino-acid biosynthesis; L-asparagine biosynthesis; L-asparagine from L-aspartate (ammonia route): step 1/1. In Treponema pallidum (strain Nichols), this protein is Aspartate--ammonia ligase.